The sequence spans 212 residues: Adapter protein MecA 2 (212 aa).

Belongs to the MecA family. Homodimer.

In terms of biological role, enables the recognition and targeting of unfolded and aggregated proteins to the ClpC protease or to other proteins involved in proteolysis. Acts negatively in the development of competence by binding ComK and recruiting it to the ClpCP protease. When overexpressed, inhibits sporulation. Also involved in Spx degradation by ClpC. This chain is Adapter protein MecA 2 (mecA2), found in Halalkalibacterium halodurans (strain ATCC BAA-125 / DSM 18197 / FERM 7344 / JCM 9153 / C-125) (Bacillus halodurans).